The primary structure comprises 428 residues: Glutamate-1-semialdehyde 2,1-aminomutase (428 aa).

An N6-(pyridoxal phosphate)lysine modification is found at lysine 265.

Belongs to the class-III pyridoxal-phosphate-dependent aminotransferase family. HemL subfamily. Homodimer. The cofactor is pyridoxal 5'-phosphate.

It is found in the cytoplasm. It carries out the reaction (S)-4-amino-5-oxopentanoate = 5-aminolevulinate. It participates in porphyrin-containing compound metabolism; protoporphyrin-IX biosynthesis; 5-aminolevulinate from L-glutamyl-tRNA(Glu): step 2/2. The sequence is that of Glutamate-1-semialdehyde 2,1-aminomutase from Shewanella frigidimarina (strain NCIMB 400).